Reading from the N-terminus, the 180-residue chain is Crossover junction endodeoxyribonuclease RuvC (180 aa).

Active-site residues include Asp-7, Glu-66, and Asp-138. The Mg(2+) site is built by Asp-7, Glu-66, and Asp-138.

The protein belongs to the RuvC family. As to quaternary structure, homodimer which binds Holliday junction (HJ) DNA. The HJ becomes 2-fold symmetrical on binding to RuvC with unstacked arms; it has a different conformation from HJ DNA in complex with RuvA. In the full resolvosome a probable DNA-RuvA(4)-RuvB(12)-RuvC(2) complex forms which resolves the HJ. Mg(2+) serves as cofactor.

Its subcellular location is the cytoplasm. The catalysed reaction is Endonucleolytic cleavage at a junction such as a reciprocal single-stranded crossover between two homologous DNA duplexes (Holliday junction).. Its function is as follows. The RuvA-RuvB-RuvC complex processes Holliday junction (HJ) DNA during genetic recombination and DNA repair. Endonuclease that resolves HJ intermediates. Cleaves cruciform DNA by making single-stranded nicks across the HJ at symmetrical positions within the homologous arms, yielding a 5'-phosphate and a 3'-hydroxyl group; requires a central core of homology in the junction. The consensus cleavage sequence is 5'-(A/T)TT(C/G)-3'. Cleavage occurs on the 3'-side of the TT dinucleotide at the point of strand exchange. HJ branch migration catalyzed by RuvA-RuvB allows RuvC to scan DNA until it finds its consensus sequence, where it cleaves and resolves the cruciform DNA. The protein is Crossover junction endodeoxyribonuclease RuvC of Herminiimonas arsenicoxydans.